The sequence spans 337 residues: MNPYPHLRPLLFCLNPEIAHNLTLQILSRAAVFIPRIKAGNPIHLLGHTFPNRLGLAAGLDKNAVAISAFDRLGFGFIEVGTATPRPQSGNPKPRLFRLPEHQAIINCMGFNNDGVVALCQQVAAVKKRTRALIGINIGKNKLTPNERAADDYLIAMSTAYPYADYLAINISSPNTVGLRDLQHGAALCELLQRLKTERDKLSAVYEKTVPLLVKIAPDNEREQLDEMLSIIEDSGIDGIIATNTTLDKTAVTGHRYADEQGGLSGKPLTEKSTKIIAHIRERLPDLPLIASGGVMSADDYYAKLEAGADLVQIYSGLIYHGPQLIKDCLRMPSPQR.

FMN-binding positions include 58–62 (AGLDK) and threonine 82. Lysine 62 contributes to the substrate binding site. 107–111 (NCMGF) is a substrate binding site. FMN-binding residues include asparagine 137 and asparagine 170. Substrate is bound at residue asparagine 170. The active-site Nucleophile is serine 173. Residue asparagine 175 coordinates substrate. Residues lysine 215 and threonine 243 each coordinate FMN. 244–245 (NT) is a binding site for substrate. FMN contacts are provided by residues glycine 266, glycine 294, and 315–316 (YS).

The protein belongs to the dihydroorotate dehydrogenase family. Type 2 subfamily. As to quaternary structure, monomer. Requires FMN as cofactor.

The protein localises to the cell membrane. It catalyses the reaction (S)-dihydroorotate + a quinone = orotate + a quinol. It participates in pyrimidine metabolism; UMP biosynthesis via de novo pathway; orotate from (S)-dihydroorotate (quinone route): step 1/1. In terms of biological role, catalyzes the conversion of dihydroorotate to orotate with quinone as electron acceptor. The chain is Dihydroorotate dehydrogenase (quinone) from Dichelobacter nodosus (strain VCS1703A).